A 261-amino-acid chain; its full sequence is uncharacterized protein (261 aa).

The interval 1-22 (MGVADNEYISVPTGEPVQQQPQ) is disordered. The next 3 membrane-spanning stretches (helical) occupy residues 92-112 (IIILFFSQQFLLFSIAPILGL), 122-142 (IVVMHFLTAAFYYIFSVIFLF), and 147-167 (INTILLSILFSIIFTLSLMNY).

The protein localises to the membrane. This is an uncharacterized protein from Dictyostelium discoideum (Social amoeba).